The following is a 322-amino-acid chain: Transaldolase (322 aa).

Lys-136 acts as the Schiff-base intermediate with substrate in catalysis.

The protein belongs to the transaldolase family. Type 1 subfamily. Homodimer.

The protein localises to the cytoplasm. The enzyme catalyses D-sedoheptulose 7-phosphate + D-glyceraldehyde 3-phosphate = D-erythrose 4-phosphate + beta-D-fructose 6-phosphate. It functions in the pathway carbohydrate degradation; pentose phosphate pathway; D-glyceraldehyde 3-phosphate and beta-D-fructose 6-phosphate from D-ribose 5-phosphate and D-xylulose 5-phosphate (non-oxidative stage): step 2/3. Functionally, transaldolase is important for the balance of metabolites in the pentose-phosphate pathway. In Xanthomonas oryzae pv. oryzae (strain PXO99A), this protein is Transaldolase.